A 63-amino-acid chain; its full sequence is UPF0337 protein Atu0782 (63 aa).

Residues 1–63 (MGSTSDKIAG…DAVKGAVDRM (63 aa)) form a disordered region. The span at 51 to 63 (KAKDAVKGAVDRM) shows a compositional bias: basic and acidic residues.

The protein belongs to the UPF0337 (CsbD) family.

The chain is UPF0337 protein Atu0782 from Agrobacterium fabrum (strain C58 / ATCC 33970) (Agrobacterium tumefaciens (strain C58)).